The sequence spans 24 residues: Brevinin-1JDb (24 aa).

The cysteines at positions 18 and 24 are disulfide-linked.

As to expression, expressed by the skin glands.

It localises to the secreted. Its function is as follows. Has antibacterial activity against E.coli and S.aureus strains. Has antifungal activity against C.albicans. Has hemolytic activity against rabbit erythrocytes. In Odorrana jingdongensis (Jingdong frog), this protein is Brevinin-1JDb.